Reading from the N-terminus, the 187-residue chain is MKINGNEIRPGNVIEHEGGLWAAVKVQHVKPGKGGAFAQVELKNLVDGRKLNERFRSAETVERVRLEQKDYQYLYENDGMLTFMDNETYEQIELSREWVGDRAAFLQDGMKVTVESHEGKALGISLPDQVVLEITETEPTVKGQTATSSYKPALLENGVRVMVPPFITTGERIVVDTNEVTYLRRAD.

The protein belongs to the elongation factor P family.

The protein resides in the cytoplasm. It functions in the pathway protein biosynthesis; polypeptide chain elongation. Involved in peptide bond synthesis. Stimulates efficient translation and peptide-bond synthesis on native or reconstituted 70S ribosomes in vitro. Probably functions indirectly by altering the affinity of the ribosome for aminoacyl-tRNA, thus increasing their reactivity as acceptors for peptidyl transferase. This chain is Elongation factor P, found in Parvibaculum lavamentivorans (strain DS-1 / DSM 13023 / NCIMB 13966).